Reading from the N-terminus, the 961-residue chain is FYVE, RhoGEF and PH domain-containing protein 1 (961 aa).

The segment covering 1–11 (MHGHRAPGGAG) has biased composition (gly residues). The tract at residues 1–353 (MHGHRAPGGA…DEEEEEEKDR (353 aa)) is disordered. Positions 27 to 38 (PPACADSDPGAS) are enriched in low complexity. Residue Ser-48 is modified to Phosphoserine. Residues 125-135 (PHPEGPQRLRS) are compositionally biased toward basic and acidic residues. Pro residues-rich tracts occupy residues 156-165 (GPKPQVPPKP) and 172-190 (RMPP…PLPA). Positions 171 to 187 (PRMPPPLEPIPPPPSRP) match the SH3-binding motif. The span at 199–213 (APRAEASPSSAAVSS) shows a compositional bias: low complexity. Residue Ser-205 is modified to Phosphoserine. Positions 231–255 (VPGPSPGPPEPVMLPQPTSQPPVPQ) are enriched in pro residues. The span at 273–284 (RDGEKVPNRDSG) shows a compositional bias: basic and acidic residues. Composition is skewed to low complexity over residues 285-294 (IDSISSPSNS) and 316-325 (ALASVPVALA). Residues 335-351 (VDSDLEEEDDEEEEEEK) show a composition bias toward acidic residues. The DH domain maps to 373 to 561 (KVFHIANELL…ATAAEHSNAA (189 aa)). Residues 590-689 (ELIKEGHILK…WVQAINSTLL (100 aa)) form the PH 1 domain. Residues 702–726 (NSTNREDEDTPPNSPNVDLGKRAPT) are disordered. Thr-711 is modified (phosphothreonine). Ser-715 carries the phosphoserine modification. The segment at 730-790 (EKEVTMCMRC…VCTDCYVALH (61 aa)) adopts an FYVE-type zinc-finger fold. Zn(2+)-binding residues include Cys-736, Cys-739, Cys-753, Cys-756, Cys-761, Cys-764, Cys-782, and Cys-785. The PH 2 domain maps to 821–921 (NSVICSFLHY…WMAVLGRAGR (101 aa)). Positions 925–961 (FCPGPTLSEDREMEEAPVAALGATAEPPESPQTRDKT) are disordered.

In terms of assembly, interacts with DBNL/ABP1 and CTTN. May interact with CCPG1. Binds CDC42. In terms of tissue distribution, expressed in fetal heart, brain, lung, kidney and placenta. Less expressed in liver; adult heart, brain, lung, pancreas and skeletal muscle.

The protein localises to the cytoplasm. Its subcellular location is the cell projection. It localises to the lamellipodium. It is found in the ruffle. The protein resides in the cytoskeleton. Functionally, activates CDC42, a member of the Ras-like family of Rho- and Rac proteins, by exchanging bound GDP for free GTP. Plays a role in regulating the actin cytoskeleton and cell shape. This chain is FYVE, RhoGEF and PH domain-containing protein 1 (FGD1), found in Homo sapiens (Human).